Consider the following 849-residue polypeptide: Leucine--tRNA ligase (849 aa).

The short motif at 44–54 (PYPSGRIHMGH) is the 'HIGH' region element. The 'KMSKS' region signature appears at 620 to 624 (KMSKS). Residue Lys-623 participates in ATP binding.

This sequence belongs to the class-I aminoacyl-tRNA synthetase family.

It localises to the cytoplasm. The catalysed reaction is tRNA(Leu) + L-leucine + ATP = L-leucyl-tRNA(Leu) + AMP + diphosphate. The chain is Leucine--tRNA ligase from Sphingopyxis alaskensis (strain DSM 13593 / LMG 18877 / RB2256) (Sphingomonas alaskensis).